The sequence spans 487 residues: N-succinylglutamate 5-semialdehyde dehydrogenase (487 aa).

221–226 (GSSDTG) lines the NAD(+) pocket. Residues Glu244 and Cys278 contribute to the active site.

Belongs to the aldehyde dehydrogenase family. AstD subfamily.

The catalysed reaction is N-succinyl-L-glutamate 5-semialdehyde + NAD(+) + H2O = N-succinyl-L-glutamate + NADH + 2 H(+). The protein operates within amino-acid degradation; L-arginine degradation via AST pathway; L-glutamate and succinate from L-arginine: step 4/5. Its function is as follows. Catalyzes the NAD-dependent reduction of succinylglutamate semialdehyde into succinylglutamate. In Burkholderia mallei (strain ATCC 23344), this protein is N-succinylglutamate 5-semialdehyde dehydrogenase.